A 288-amino-acid polypeptide reads, in one-letter code: Putative hydrolase LipZ (288 aa).

The protein belongs to the AB hydrolase superfamily.

In Mycobacterium tuberculosis (strain CDC 1551 / Oshkosh), this protein is Putative hydrolase LipZ.